The sequence spans 535 residues: Dimethylaniline monooxygenase [N-oxide-forming] 2 (535 aa).

Alanine 2 bears the N-acetylalanine mark. Residues 9–13 (GAGVS), glutamate 32, 40–41 (LW), and 61–62 (NT) contribute to the FAD site. Residues 60 to 61 (TN) and 195 to 198 (SASD) each bind NADP(+). Residue lysine 492 forms a Glycyl lysine isopeptide (Lys-Gly) (interchain with G-Cter in SUMO) linkage. The helical transmembrane segment at 510–530 (LSASFLMKILALVAVFVAFFS) threads the bilayer.

This sequence belongs to the FMO family. The cofactor is FAD. Mg(2+) is required as a cofactor. As to expression, lung.

Its subcellular location is the microsome membrane. The protein resides in the endoplasmic reticulum membrane. In terms of biological role, catalyzes the oxidative metabolism of numerous xenobiotics, including mainly therapeutic drugs and insecticides that contain a soft nucleophile, most commonly nitrogen and sulfur and participates to their bioactivation. The polypeptide is Dimethylaniline monooxygenase [N-oxide-forming] 2 (Cavia porcellus (Guinea pig)).